A 203-amino-acid chain; its full sequence is Suppressor of RNA silencing p3 (203 aa).

This sequence belongs to the tenuiviruses p3 protein family. In terms of assembly, homodimer.

It is found in the host cytoplasm. Functionally, acts as a suppressor of RNA-mediated gene silencing, also known as post-transcriptional gene silencing (PTGS), presumably through the binding of dsRNA. The chain is Suppressor of RNA silencing p3 from Oryza sativa (Rice).